A 952-amino-acid polypeptide reads, in one-letter code: Microtubule-associated protein 6 (952 aa).

The tract at residues 1–15 (MAWPCITRACCIARF) is calmodulin-binding. Residues Cys5, Cys10, and Cys11 are each lipidated (S-palmitoyl cysteine). 2 disordered regions span residues 37-457 (TEHP…RAVA) and 486-952 (IKPV…EGSP). Residues 41-55 (GAPPQPPAPPQPGLA) are compositionally biased toward pro residues. Ser98 is modified (phosphoserine). The segment covering 105-117 (ASGSTSGSGPADS) has biased composition (low complexity). The mn 1 stretch occupies residues 116-139 (DSVMRQDYRAWKVQRPEPSCRPRS). Positions 119 to 139 (MRQDYRAWKVQRPEPSCRPRS) are enriched in basic and acidic residues. The segment at 124–138 (RAWKVQRPEPSCRPR) is calmodulin-binding. Tyr141 bears the Phosphotyrosine mark. The segment covering 147–171 (PFERETQYQKDFRAWPLPRRGDHPW) has biased composition (basic and acidic residues). Residues 151 to 174 (ETQYQKDFRAWPLPRRGDHPWIPK) form a mn 2 region. Residues 160–174 (AWPLPRRGDHPWIPK) form a calmodulin-binding region. Ser185 bears the Phosphoserine mark. Positions 187–201 (PVLGMPKRRPQSQER) are calmodulin-binding. Phosphoserine is present on Ser207. Residues 221-230 (VPAAGKASGA) are compositionally biased toward low complexity. Residues 222 to 267 (PAAGKASGADQRDTRRKAGPAWMVTRTEGHEEKPLPPAQSQTQEGG) form a Mc-1 repeat. The tract at residues 222–451 (PAAGKASGAD…HAQGTGPEGG (230 aa)) is 5 X approximate tandem repeat Mc. 8 calmodulin-binding regions span residues 235 to 249 (TRRKAGPAWMVTRTE), 280 to 294 (DTRRKAGPAWMVTRT), 325 to 339 (RDTRRKAGPAWMVTR), 373 to 387 (TRRKAGPAWMVTRTE), 421 to 435 (RKAGPAWMVRRSEGH), 481 to 495 (RAWTDIKPVKPIKAK), 532 to 546 (RRRIRSLYSEPFKES), and 559 to 573 (PKKTSTSQKPLRKAK). A Mc-2 repeat occupies 268–313 (PAAGKASGADQRDTRRKAGPAWMVTRTEGHEEKPLPPAQSQTQEGG). Residues 314-359 (PAAGKASGADQRDTRRKAGPAWMVTRTEGHEETPLPPAQSQTQEGG) form a Mc-3 repeat. Residues 360–405 (PAAGKASGADQRDTRRKAGPAWMVTRTEGHEETPLPPAQSQTQEGG) form a Mc-4 repeat. Residues 406–451 (PAAGKASGADERDTRRKAGPAWMVRRSEGHEQTTAAHAQGTGPEGG) form a Mc-5 repeat. Positions 473–496 (SSSYRNEFRAWTDIKPVKPIKAKP) are mn 3. The segment covering 542 to 551 (PFKESPKVEK) has biased composition (basic and acidic residues). Over residues 552 to 567 (PSVQSSKPKKTSTSQK) the composition is skewed to low complexity. Residue Ser590 is modified to Phosphoserine. Residues 595–621 (KPDDKEQSKEMNNKLAEAKESRVKPTS) are compositionally biased toward basic and acidic residues. Ser681 is subject to Phosphoserine. Positions 711-725 (KDQDHMASELLKNKD) are enriched in basic and acidic residues. Phosphoserine is present on Ser736. The span at 761–775 (APAPTPLKDPGPVIP) shows a compositional bias: pro residues. Composition is skewed to basic and acidic residues over residues 776 to 792 (EPEKDGAPMVPERRKDQ) and 821 to 831 (PAKDTGTDLKG). A compositionally biased stretch (pro residues) spans 903 to 915 (VPAPTKDPGPTAP). The residue at position 951 (Ser951) is a Phosphoserine.

Belongs to the STOP family. As to quaternary structure, interacts with calmodulin (via C-terminus); the interaction is dependent on Ca(2+). Interacts (via C-terminus) with TMEM106B (via N-terminus). Interacts with ZDHHC13 (via ANK repeats). Interacts with ZDHHC17 (via ANK repeats). Post-translationally, palmitoylated. Probably depalmitoylated by ABHD17A, ABHD17B and ABHD17C. During neuronal polarization, palmitoylation and depalmitoylation cycles regulate MAP6 shuttling between secretory vesicles and microtubules, and its polarized distribution in the axon. As to expression, isoform 1 is specifically expressed in adult brain. Isoform 2 is predominantly expressed in embryonic brain; expression persists at low levels in the adult brain.

It localises to the cytoplasm. Its subcellular location is the cytoskeleton. It is found in the golgi apparatus. The protein resides in the cell projection. The protein localises to the axon. It localises to the dendrite. Its subcellular location is the cytoplasmic vesicle. It is found in the secretory vesicle membrane. Functionally, involved in microtubule stabilization in many cell types, including neuronal cells. Specifically has microtubule cold stabilizing activity. Involved in dendrite morphogenesis and maintenance by regulating lysosomal trafficking via its interaction with TMEM106B. Regulates KIF5A-mediated axonal cargo transport. Regulates axonal growth during neuron polarization. The sequence is that of Microtubule-associated protein 6 (Map6) from Rattus norvegicus (Rat).